The primary structure comprises 694 residues: Polyphosphate kinase (694 aa).

Asn-45 contacts ATP. 2 residues coordinate Mg(2+): Arg-367 and Arg-397. His-427 functions as the Phosphohistidine intermediate in the catalytic mechanism. The ATP site is built by Tyr-460, Arg-553, and His-580.

It belongs to the polyphosphate kinase 1 (PPK1) family. Mg(2+) is required as a cofactor. An intermediate of this reaction is the autophosphorylated ppk in which a phosphate is covalently linked to a histidine residue through a N-P bond.

It catalyses the reaction [phosphate](n) + ATP = [phosphate](n+1) + ADP. Catalyzes the reversible transfer of the terminal phosphate of ATP to form a long-chain polyphosphate (polyP). This is Polyphosphate kinase from Campylobacter jejuni subsp. jejuni serotype O:6 (strain 81116 / NCTC 11828).